A 284-amino-acid chain; its full sequence is 4-hydroxy-3-methylbut-2-enyl diphosphate reductase (284 aa).

C12 contributes to the [4Fe-4S] cluster binding site. Positions 40 and 72 each coordinate (2E)-4-hydroxy-3-methylbut-2-enyl diphosphate. H40 and H72 together coordinate dimethylallyl diphosphate. Isopentenyl diphosphate contacts are provided by H40 and H72. C94 lines the [4Fe-4S] cluster pocket. H122 contacts (2E)-4-hydroxy-3-methylbut-2-enyl diphosphate. H122 lines the dimethylallyl diphosphate pocket. Position 122 (H122) interacts with isopentenyl diphosphate. E124 serves as the catalytic Proton donor. T161 provides a ligand contact to (2E)-4-hydroxy-3-methylbut-2-enyl diphosphate. A [4Fe-4S] cluster-binding site is contributed by C193. Positions 221, 223, and 264 each coordinate (2E)-4-hydroxy-3-methylbut-2-enyl diphosphate. Residues S221, N223, and S264 each coordinate dimethylallyl diphosphate. Isopentenyl diphosphate is bound by residues S221, N223, and S264.

It belongs to the IspH family. [4Fe-4S] cluster is required as a cofactor.

The enzyme catalyses isopentenyl diphosphate + 2 oxidized [2Fe-2S]-[ferredoxin] + H2O = (2E)-4-hydroxy-3-methylbut-2-enyl diphosphate + 2 reduced [2Fe-2S]-[ferredoxin] + 2 H(+). The catalysed reaction is dimethylallyl diphosphate + 2 oxidized [2Fe-2S]-[ferredoxin] + H2O = (2E)-4-hydroxy-3-methylbut-2-enyl diphosphate + 2 reduced [2Fe-2S]-[ferredoxin] + 2 H(+). It participates in isoprenoid biosynthesis; dimethylallyl diphosphate biosynthesis; dimethylallyl diphosphate from (2E)-4-hydroxy-3-methylbutenyl diphosphate: step 1/1. It functions in the pathway isoprenoid biosynthesis; isopentenyl diphosphate biosynthesis via DXP pathway; isopentenyl diphosphate from 1-deoxy-D-xylulose 5-phosphate: step 6/6. Functionally, catalyzes the conversion of 1-hydroxy-2-methyl-2-(E)-butenyl 4-diphosphate (HMBPP) into a mixture of isopentenyl diphosphate (IPP) and dimethylallyl diphosphate (DMAPP). Acts in the terminal step of the DOXP/MEP pathway for isoprenoid precursor biosynthesis. The sequence is that of 4-hydroxy-3-methylbut-2-enyl diphosphate reductase from Dehalococcoides mccartyi (strain ATCC BAA-2100 / JCM 16839 / KCTC 5957 / BAV1).